The chain runs to 300 residues: Homoserine kinase (300 aa).

ATP is bound at residue 87–97; that stretch reads PISRGLGSSSA.

This sequence belongs to the GHMP kinase family. Homoserine kinase subfamily.

It is found in the cytoplasm. It carries out the reaction L-homoserine + ATP = O-phospho-L-homoserine + ADP + H(+). The protein operates within amino-acid biosynthesis; L-threonine biosynthesis; L-threonine from L-aspartate: step 4/5. Its function is as follows. Catalyzes the ATP-dependent phosphorylation of L-homoserine to L-homoserine phosphate. In Clostridium kluyveri (strain ATCC 8527 / DSM 555 / NBRC 12016 / NCIMB 10680 / K1), this protein is Homoserine kinase.